The primary structure comprises 538 residues: Phosphoenolpyruvate carboxykinase (ATP) (538 aa).

Substrate is bound by residues Arg64, Tyr206, and Lys212. Residues Lys212, His231, and 247–255 contribute to the ATP site; that span reads GLSGTGKTT. Residues Lys212 and His231 each coordinate Mn(2+). Mn(2+) is bound at residue Asp268. Residues Glu296, Arg332, 448–449, and Thr454 each bind ATP; that span reads RI. Arg332 provides a ligand contact to substrate.

Belongs to the phosphoenolpyruvate carboxykinase (ATP) family. In terms of assembly, monomer. Mn(2+) serves as cofactor.

The protein localises to the cytoplasm. It carries out the reaction oxaloacetate + ATP = phosphoenolpyruvate + ADP + CO2. Its pathway is carbohydrate biosynthesis; gluconeogenesis. Its function is as follows. Involved in the gluconeogenesis. Catalyzes the conversion of oxaloacetate (OAA) to phosphoenolpyruvate (PEP) through direct phosphoryl transfer between the nucleoside triphosphate and OAA. The protein is Phosphoenolpyruvate carboxykinase (ATP) of Enterobacter sp. (strain 638).